The sequence spans 500 residues: Lysine--tRNA ligase (500 aa).

Mg(2+) contacts are provided by glutamate 410 and glutamate 417.

The protein belongs to the class-II aminoacyl-tRNA synthetase family. As to quaternary structure, homodimer. Mg(2+) serves as cofactor.

It is found in the cytoplasm. The enzyme catalyses tRNA(Lys) + L-lysine + ATP = L-lysyl-tRNA(Lys) + AMP + diphosphate. The chain is Lysine--tRNA ligase from Pseudomonas entomophila (strain L48).